The chain runs to 118 residues: UPF0125 protein RSc1426 (118 aa).

The protein belongs to the UPF0125 (RnfH) family.

This chain is UPF0125 protein RSc1426, found in Ralstonia nicotianae (strain ATCC BAA-1114 / GMI1000) (Ralstonia solanacearum).